The chain runs to 86 residues: Large ribosomal subunit protein bL27 (86 aa).

Positions 1–10 (MAQKKGGGST) are enriched in gly residues. Residues 1 to 21 (MAQKKGGGSTRNGRDSESKRL) are disordered.

This sequence belongs to the bacterial ribosomal protein bL27 family.

The chain is Large ribosomal subunit protein bL27 from Ralstonia nicotianae (strain ATCC BAA-1114 / GMI1000) (Ralstonia solanacearum).